We begin with the raw amino-acid sequence, 483 residues long: CdaA regulatory protein CdaR (483 aa).

A helical transmembrane segment spans residues 9–26 (WAVKIIALLFALLLYVAV). YbbR-like domains are found at residues 55–135 (IPVK…TVTI), 143–228 (FPVE…KITV), 237–316 (VPFK…TLHI), and 329–394 (VPIK…VNGP). The segment at 410–483 (LTSKKSNTST…STANSQSSSE (74 aa)) is disordered. Over residues 413 to 430 (KKSNTSTNDNSSNTSGNQ) the composition is skewed to low complexity. Residues 431–454 (DTDKQTNDQKNNQQEDTKNTDKNN) are compositionally biased toward basic and acidic residues.

As to quaternary structure, interacts with CdaA.

It localises to the cell membrane. In terms of biological role, upon coexpression in E.coli stimulates the diadenylate cyclase activity of CdaA about 20-fold. In B.subtilis c-di-AMP is a second messenger that mediates growth, DNA repair and cell wall homeostasis; it is toxic when present in excess. This chain is CdaA regulatory protein CdaR, found in Bacillus subtilis (strain 168).